The sequence spans 582 residues: Zinc finger protein 319 (582 aa).

Low complexity predominate over residues 1–14 (MSESWQQPPQTQPQ). The tract at residues 1 to 39 (MSESWQQPPQTQPQQPQPPQPQHHAEPPPALAEHTLPPG) is disordered. Residues 76-100 (PKCGVCGHDLAHLSSPHEHQCLAGH) form a C2H2-type 1 zinc finger. The segment at 104 to 126 (FQCTQCLKIFHQATDLLEHQCVQ) adopts a C2H2-type 2; degenerate zinc-finger fold. Lysine 130 is covalently cross-linked (Glycyl lysine isopeptide (Lys-Gly) (interchain with G-Cter in SUMO2)). The C2H2-type 3 zinc finger occupies 132 to 154 (FVCGVCKMGFSLLTSLAQHHSSH). A compositionally biased stretch (low complexity) spans 174 to 196 (EPATTAAPSLPAAPAPSTVTPAE). Positions 174–198 (EPATTAAPSLPAAPAPSTVTPAEQA) are disordered. 3 C2H2-type zinc fingers span residues 202–224 (YSCP…ERIH), 230–252 (YKCT…KRTH), and 258–280 (YKCA…MYAH). Serine 281 bears the Phosphoserine mark. Residues 287-309 (FRCNVCELHFKESSELLQHPCTP) form a C2H2-type 7; degenerate zinc finger. C2H2-type zinc fingers lie at residues 315-337 (FRCG…ERTH), 343-365 (FKCD…RRTH), and 371-393 (FKCG…QHVH). Residues 399–421 (FKCPVCQKGFDQSAELLRHKCLP) form a C2H2-type 11; degenerate zinc finger. The C2H2-type 12 zinc-finger motif lies at 428-450 (FKCPVCNKAYKRASALQKHQLAH). The C2H2-type 13; degenerate zinc finger occupies 458–480 (LRCTLCERRFFSSSEFVQHRCDP). C2H2-type zinc fingers lie at residues 486 to 508 (LKCP…RRVH), 514 to 536 (YKCP…QGVH), and 542 to 564 (FKCV…SAQH).

Belongs to the krueppel C2H2-type zinc-finger protein family.

The protein localises to the nucleus. May be involved in transcriptional regulation. This Homo sapiens (Human) protein is Zinc finger protein 319 (ZNF319).